The chain runs to 151 residues: Small ribosomal subunit protein uS19 (151 aa).

It belongs to the universal ribosomal protein uS19 family.

This chain is Small ribosomal subunit protein uS19 (RPS15), found in Picea mariana (Black spruce).